Here is a 292-residue protein sequence, read N- to C-terminus: Cyclin-dependent-like kinase 5 (292 aa).

One can recognise a Protein kinase domain in the interval 4 to 286 (YDKMEKIGEG…ADAALRHAYF (283 aa)). ATP is bound by residues 10–18 (IGEGTYGTV) and Lys33. The active-site Proton acceptor is the Asp126. Residues Asn131 and Asp144 each contribute to the Mg(2+) site.

This sequence belongs to the protein kinase superfamily. CMGC Ser/Thr protein kinase family. CDC2/CDKX subfamily. Heterodimer composed of a catalytic subunit cdk-5 and a regulatory subunit cdka-1. Interaction with cdka-1 is required for cdk-5 activation. Mg(2+) serves as cofactor.

The protein resides in the cytoplasm. It localises to the cell projection. Its subcellular location is the dendrite. The catalysed reaction is L-seryl-[protein] + ATP = O-phospho-L-seryl-[protein] + ADP + H(+). It carries out the reaction L-threonyl-[protein] + ATP = O-phospho-L-threonyl-[protein] + ADP + H(+). In terms of biological role, proline-directed serine/threonine-protein kinase which, in several motor neurons, promotes the polarized trafficking of synaptic vesicles and dense-core vesicles (DCV). In the ventral nerve cord, phosphorylates lin-10 and thereby prevents lin-10-mediated anterograde trafficking of the glutamate receptor glr-1. Involved in the inhibition of glr-1 trafficking in hypoxic conditions. In DA motor neurons but not in DB motor neurons, regulates axonal transport of synaptic vesicle precursors by inhibiting dynein-mediated retrograde transport. Regulates the trafficking of dense-core vesicles in DA and DB motor neurons by promoting anterograde trafficking to the axon and preventing dynein-dependent trafficking to the dendrite. May regulate these processes in association with cdka-1/p35. Activity may be regulated by cyy-1. Involved in synapse formation during DD motor neuron remodeling by regulating transport of disassembled synaptic material to the new synaptic sites probably by activating the motor protein unc-104/kinesin-3. Regulates microtubule polarity in the dendrite of DB motor neurons. May also play a role in GABAergic synaptic vesicle localization in the ventral nerve cord. The protein is Cyclin-dependent-like kinase 5 of Caenorhabditis elegans.